The primary structure comprises 89 residues: MKKIFQLSFTVFIIFISLVLGVVGNVQQKRSNRCIDFPVNPKTGLCVLKDCESVCKKTSKGLEGICWKFNAKGKDPKQCKCCGLWPPLY.

A signal peptide spans 1–24 (MKKIFQLSFTVFIIFISLVLGVVG). 4 cysteine pairs are disulfide-bonded: C34/C82, C46/C66, C51/C79, and C55/C81.

It belongs to the DEFL family. In terms of tissue distribution, expressed in flower buds, but not in stems, roots or rosette leaves.

It localises to the secreted. In Arabidopsis thaliana (Mouse-ear cress), this protein is Defensin-like protein 147 (LCR1).